A 256-amino-acid chain; its full sequence is Thiazole synthase (256 aa).

Catalysis depends on Lys-95, which acts as the Schiff-base intermediate with DXP. Residues Gly-156, 182-183 (AG), and 204-205 (NT) contribute to the 1-deoxy-D-xylulose 5-phosphate site.

It belongs to the ThiG family. In terms of assembly, homotetramer. Forms heterodimers with either ThiH or ThiS.

The protein resides in the cytoplasm. It catalyses the reaction [ThiS sulfur-carrier protein]-C-terminal-Gly-aminoethanethioate + 2-iminoacetate + 1-deoxy-D-xylulose 5-phosphate = [ThiS sulfur-carrier protein]-C-terminal Gly-Gly + 2-[(2R,5Z)-2-carboxy-4-methylthiazol-5(2H)-ylidene]ethyl phosphate + 2 H2O + H(+). It functions in the pathway cofactor biosynthesis; thiamine diphosphate biosynthesis. In terms of biological role, catalyzes the rearrangement of 1-deoxy-D-xylulose 5-phosphate (DXP) to produce the thiazole phosphate moiety of thiamine. Sulfur is provided by the thiocarboxylate moiety of the carrier protein ThiS. In vitro, sulfur can be provided by H(2)S. The protein is Thiazole synthase of Escherichia coli O7:K1 (strain IAI39 / ExPEC).